The primary structure comprises 180 residues: ATP-dependent protease subunit HslV (180 aa).

Thr-5 is an active-site residue. Positions 165, 168, and 171 each coordinate Na(+).

Belongs to the peptidase T1B family. HslV subfamily. In terms of assembly, a double ring-shaped homohexamer of HslV is capped on each side by a ring-shaped HslU homohexamer. The assembly of the HslU/HslV complex is dependent on binding of ATP.

The protein localises to the cytoplasm. It catalyses the reaction ATP-dependent cleavage of peptide bonds with broad specificity.. Allosterically activated by HslU binding. Its function is as follows. Protease subunit of a proteasome-like degradation complex believed to be a general protein degrading machinery. This Helicobacter acinonychis (strain Sheeba) protein is ATP-dependent protease subunit HslV.